The sequence spans 305 residues: Major pollen allergen Pha a 5.2 (305 aa).

The N-terminal stretch at 1-25 (MAVQKYTVALFLAVALVAGPAALYA) is a signal peptide. Residues 65–85 (GLNEEKNAARQTDDEQKRSDE) show a composition bias toward basic and acidic residues. Disordered regions lie at residues 65 to 87 (GLNEEKNAARQTDDEQKRSDEIN) and 279 to 299 (STATPAAPPPPQLGTATPAAV).

The protein belongs to the Poa p IX/Phl p VI allergen family.

This Phalaris aquatica (Canary grass) protein is Major pollen allergen Pha a 5.2.